The primary structure comprises 527 residues: Cytochrome b5 reductase 4 (527 aa).

Positions 1–24 (MLNVPSQAFPAAGSQQRVAPAGQS) are disordered. The 77-residue stretch at 56–132 (LIEVTEDELK…LKECLVGRMA (77 aa)) folds into the Cytochrome b5 heme-binding domain. Residues His-91 and His-114 each contribute to the heme site. The segment at 138-171 (ALQAHTEKTESTHLNGLSAPPSLRPEPLSAPLPA) is disordered. One can recognise a CS domain in the interval 173 to 264 (DHRPRYDWFQ…SVKEKWTQLG (92 aa)). Residues 281 to 392 (LFYRECVLLS…GGPEGSFTLR (112 aa)) form the FAD-binding FR-type domain. FAD contacts are provided by residues 372–387 (ANLP…GPEG) and 399–431 (HLYM…KMKL).

This sequence belongs to the flavoprotein pyridine nucleotide cytochrome reductase family. It depends on FAD as a cofactor.

It is found in the endoplasmic reticulum. The catalysed reaction is 2 Fe(III)-[cytochrome b5] + NADH = 2 Fe(II)-[cytochrome b5] + NAD(+) + H(+). In terms of biological role, NADH-cytochrome b5 reductase involved in endoplasmic reticulum stress response pathway. This Danio rerio (Zebrafish) protein is Cytochrome b5 reductase 4 (cyb5r4).